The sequence spans 436 residues: Trigger factor (436 aa).

A PPIase FKBP-type domain is found at 161–246 (EDQLNIDFVG…VNTVSEPKLP (86 aa)).

Belongs to the FKBP-type PPIase family. Tig subfamily.

The protein resides in the cytoplasm. It carries out the reaction [protein]-peptidylproline (omega=180) = [protein]-peptidylproline (omega=0). Involved in protein export. Acts as a chaperone by maintaining the newly synthesized protein in an open conformation. Functions as a peptidyl-prolyl cis-trans isomerase. In Pseudomonas fluorescens (strain Pf0-1), this protein is Trigger factor.